The primary structure comprises 257 residues: 5'-nucleotidase SurE (257 aa).

Positions 8, 9, 40, and 93 each coordinate a divalent metal cation.

The protein belongs to the SurE nucleotidase family. A divalent metal cation serves as cofactor.

Its subcellular location is the cytoplasm. It catalyses the reaction a ribonucleoside 5'-phosphate + H2O = a ribonucleoside + phosphate. In terms of biological role, nucleotidase that shows phosphatase activity on nucleoside 5'-monophosphates. The chain is 5'-nucleotidase SurE from Phenylobacterium zucineum (strain HLK1).